The following is a 288-amino-acid chain: Shikimate dehydrogenase (NADP(+)) (288 aa).

Residues 22-24 and Thr69 contribute to the shikimate site; that span reads SLS. The active-site Proton acceptor is Lys73. Shikimate is bound by residues Asn94 and Asp110. NADP(+)-binding positions include 131-135 and Leu228; that span reads GSGGA. Tyr230 is a shikimate binding site. Gly251 contacts NADP(+).

It belongs to the shikimate dehydrogenase family. As to quaternary structure, homodimer.

The enzyme catalyses shikimate + NADP(+) = 3-dehydroshikimate + NADPH + H(+). Its pathway is metabolic intermediate biosynthesis; chorismate biosynthesis; chorismate from D-erythrose 4-phosphate and phosphoenolpyruvate: step 4/7. Its function is as follows. Involved in the biosynthesis of the chorismate, which leads to the biosynthesis of aromatic amino acids. Catalyzes the reversible NADPH linked reduction of 3-dehydroshikimate (DHSA) to yield shikimate (SA). This is Shikimate dehydrogenase (NADP(+)) from Synechococcus sp. (strain JA-2-3B'a(2-13)) (Cyanobacteria bacterium Yellowstone B-Prime).